The chain runs to 355 residues: Guanine nucleotide-binding protein G(o) subunit alpha (355 aa).

Positions 1 to 17 are enriched in low complexity; sequence MGCASSAEERAAPSAQQ. The disordered stretch occupies residues 1–24; sequence MGCASSAEERAAPSAQQADREKLK. Gly-2 carries N-myristoyl glycine lipidation. The S-palmitoyl cysteine moiety is linked to residue Cys-3. The 324-residue stretch at 32–355 folds into the G-alpha domain; sequence KDIKLLLLGA…ANNLRGCGLY (324 aa). The tract at residues 35 to 48 is G1 motif; it reads KLLLLGAGESGKST. Residues 40 to 47, 176 to 182, 201 to 205, 201 to 206, 271 to 274, and Ala-327 each bind GTP; these read GAGESGKS, LRTRVKT, DVGRG, DVGRGQ, and NKKD. Residues Ser-47 and Thr-182 each coordinate Mg(2+). The interval 174 to 182 is G2 motif; sequence DILRTRVKT. The G3 motif stretch occupies residues 197–206; the sequence is FKLFDVGRGQ. Residues 267-274 form a G4 motif region; the sequence is ILFLNKKD. The G5 motif stretch occupies residues 326–330; that stretch reads TATDT.

This sequence belongs to the G-alpha family. G(i/o/t/z) subfamily. G proteins are composed of 3 units; alpha, beta and gamma. The alpha chain contains the guanine nucleotide binding site.

Its function is as follows. Guanine nucleotide-binding proteins (G proteins) are involved as modulators or transducers in various transmembrane signaling systems. The G(o) protein function is not clear. This chain is Guanine nucleotide-binding protein G(o) subunit alpha, found in Manduca sexta (Tobacco hawkmoth).